The chain runs to 335 residues: Dihydroorotate dehydrogenase (quinone) (335 aa).

FMN-binding positions include 58–62 (AGADK) and Thr-82. Lys-62 contributes to the substrate binding site. Residue 107-111 (NRNGF) coordinates substrate. FMN-binding residues include Asn-135 and Asn-168. Substrate is bound at residue Asn-168. Ser-171 serves as the catalytic Nucleophile. Asn-173 is a binding site for substrate. FMN-binding residues include Lys-213 and Gly-241. 242-243 (NT) serves as a coordination point for substrate. Residues Gly-264, Gly-293, and 314-315 (YS) contribute to the FMN site.

It belongs to the dihydroorotate dehydrogenase family. Type 2 subfamily. In terms of assembly, monomer. Requires FMN as cofactor.

The protein resides in the cell membrane. The enzyme catalyses (S)-dihydroorotate + a quinone = orotate + a quinol. The protein operates within pyrimidine metabolism; UMP biosynthesis via de novo pathway; orotate from (S)-dihydroorotate (quinone route): step 1/1. Catalyzes the conversion of dihydroorotate to orotate with quinone as electron acceptor. The polypeptide is Dihydroorotate dehydrogenase (quinone) (Actinobacillus pleuropneumoniae serotype 7 (strain AP76)).